A 3996-amino-acid chain; its full sequence is Probable E3 ubiquitin-protein ligase HECTD4 (3996 aa).

Residues 282-302 traverse the membrane as a helical segment; sequence TCIIRCILVVFQVVFKFFFSP. A compositionally biased stretch (polar residues) spans 1494-1510; sequence PTASEPDTTLTKTSPKN. 2 disordered regions span residues 1494–1524 and 1616–1637; these read PTAS…ESEA and PETV…SICR. At Thr2080 the chain carries Phosphothreonine. Disordered stretches follow at residues 2219-2245, 2859-2919, 3017-3053, and 3327-3403; these read FITS…DDIP, TSAT…PTVL, EDTK…STSS, and FDKS…QEVP. The segment covering 2232–2245 has biased composition (acidic residues); it reads ADDESDDDDDDDIP. The span at 2866-2887 shows a compositional bias: low complexity; it reads LSDSSSSSSSSPGQTPQSPSLL. Residues 2888–2897 are compositionally biased toward basic residues; that stretch reads SKRKKVKMKR. Composition is skewed to basic and acidic residues over residues 3017-3037, 3327-3341, and 3370-3403; these read EDTK…EPEK, FDKS…EQHP, and LSEK…QEVP. An HECT domain is found at 3627-3996; sequence SGGDPTYAFN…IHYREDPLSG (370 aa). The active-site Glycyl thioester intermediate is Cys3964.

The protein localises to the membrane. It catalyses the reaction S-ubiquitinyl-[E2 ubiquitin-conjugating enzyme]-L-cysteine + [acceptor protein]-L-lysine = [E2 ubiquitin-conjugating enzyme]-L-cysteine + N(6)-ubiquitinyl-[acceptor protein]-L-lysine.. It participates in protein modification; protein ubiquitination. Its function is as follows. E3 ubiquitin-protein ligase which accepts ubiquitin from an E2 ubiquitin-conjugating enzyme in the form of a thioester and then directly transfers the ubiquitin to targeted substrates. The sequence is that of Probable E3 ubiquitin-protein ligase HECTD4 (HECTD4) from Homo sapiens (Human).